Consider the following 388-residue polypeptide: F-box protein At5g42460 (388 aa).

Positions 1 to 47 (MTIMSDLPRDLLAEILSRVPLTSLRAVRLTCKKWNDLSKDRSFLKKQ) constitute an F-box domain.

This chain is F-box protein At5g42460, found in Arabidopsis thaliana (Mouse-ear cress).